A 138-amino-acid chain; its full sequence is Transcription antitermination protein NusB (138 aa).

Belongs to the NusB family.

Its function is as follows. Involved in transcription antitermination. Required for transcription of ribosomal RNA (rRNA) genes. Binds specifically to the boxA antiterminator sequence of the ribosomal RNA (rrn) operons. The polypeptide is Transcription antitermination protein NusB (Desulforudis audaxviator (strain MP104C)).